A 505-amino-acid chain; its full sequence is 2,3-bisphosphoglycerate-independent phosphoglycerate mutase (505 aa).

The Mn(2+) site is built by Asp-12 and Ser-62. The active-site Phosphoserine intermediate is Ser-62. Residues His-123, 153–154 (RD), Arg-185, Arg-191, 257–260 (RPDR), and Lys-330 contribute to the substrate site. 5 residues coordinate Mn(2+): Asp-397, His-401, Asp-438, His-439, and His-456.

The protein belongs to the BPG-independent phosphoglycerate mutase family. In terms of assembly, monomer. It depends on Mn(2+) as a cofactor.

It catalyses the reaction (2R)-2-phosphoglycerate = (2R)-3-phosphoglycerate. It functions in the pathway carbohydrate degradation; glycolysis; pyruvate from D-glyceraldehyde 3-phosphate: step 3/5. Catalyzes the interconversion of 2-phosphoglycerate and 3-phosphoglycerate. In Staphylococcus aureus (strain Mu50 / ATCC 700699), this protein is 2,3-bisphosphoglycerate-independent phosphoglycerate mutase.